Consider the following 190-residue polypeptide: Dynein axonemal light chain 1 (190 aa).

The residue at position 2 (alanine 2) is an N-acetylalanine. LRR repeat units follow at residues 49–70, 71–92, 94–115, and 116–137; these read NCEK…NGLK, NLRI…EAVG, TLEE…HVMK, and KLKI…VKLA. Residue serine 56 is modified to Phosphoserine. The 41-residue stretch at 150–190 folds into the LRRCT domain; it reads NPLEEKHSAEGNWVEEATKRVPKLKKLDGTPVIKEDEEEDN.

Belongs to the dynein light chain LC1-type family. As to quaternary structure, interacts with ZMYND10 (via C-terminus). Interacts with DNAH5, a outer arm dynein heavy chain. Interacts with tubulin located within the A-tubule of the outer doublets in a ATP-independent manner.

The protein localises to the cytoplasm. It localises to the cytoskeleton. Its subcellular location is the cilium axoneme. Its function is as follows. Part of the multisubunit axonemal ATPase complexes that generate the force for cilia motility and govern beat frequency. Component of the outer arm dynein (ODA). May be involved in a mechanosensory feedback mechanism controlling ODA activity based on external conformational cues by tethering the outer arm dynein heavy chain (DNAH5) to the microtubule within the axoneme. Important for ciliary function in the airways and for the function of the cilia that produce the nodal flow essential for the determination of the left-right asymmetry. This Bos taurus (Bovine) protein is Dynein axonemal light chain 1 (DNAL1).